An 855-amino-acid chain; its full sequence is Valine--tRNA ligase (855 aa).

Residues Pro-44–Asn-54 carry the 'HIGH' region motif. A 'KMSKS' region motif is present at residues Lys-522–Ser-526. Residue Lys-525 participates in ATP binding.

This sequence belongs to the class-I aminoacyl-tRNA synthetase family. ValS type 2 subfamily.

It localises to the cytoplasm. The enzyme catalyses tRNA(Val) + L-valine + ATP = L-valyl-tRNA(Val) + AMP + diphosphate. Functionally, catalyzes the attachment of valine to tRNA(Val). As ValRS can inadvertently accommodate and process structurally similar amino acids such as threonine, to avoid such errors, it has a 'posttransfer' editing activity that hydrolyzes mischarged Thr-tRNA(Val) in a tRNA-dependent manner. This chain is Valine--tRNA ligase, found in Methanothrix thermoacetophila (strain DSM 6194 / JCM 14653 / NBRC 101360 / PT) (Methanosaeta thermophila).